Here is a 459-residue protein sequence, read N- to C-terminus: tRNA-2-methylthio-N(6)-dimethylallyladenosine synthase (459 aa).

One can recognise an MTTase N-terminal domain in the interval Met1–Arg116. 6 residues coordinate [4Fe-4S] cluster: Cys10, Cys46, Cys79, Cys148, Cys152, and Cys155. The Radical SAM core domain maps to Pro134–Arg367. In terms of domain architecture, TRAM spans Ala370 to Gly433.

It belongs to the methylthiotransferase family. MiaB subfamily. In terms of assembly, monomer. [4Fe-4S] cluster serves as cofactor.

It is found in the cytoplasm. It carries out the reaction N(6)-dimethylallyladenosine(37) in tRNA + (sulfur carrier)-SH + AH2 + 2 S-adenosyl-L-methionine = 2-methylsulfanyl-N(6)-dimethylallyladenosine(37) in tRNA + (sulfur carrier)-H + 5'-deoxyadenosine + L-methionine + A + S-adenosyl-L-homocysteine + 2 H(+). Catalyzes the methylthiolation of N6-(dimethylallyl)adenosine (i(6)A), leading to the formation of 2-methylthio-N6-(dimethylallyl)adenosine (ms(2)i(6)A) at position 37 in tRNAs that read codons beginning with uridine. The sequence is that of tRNA-2-methylthio-N(6)-dimethylallyladenosine synthase from Deinococcus geothermalis (strain DSM 11300 / CIP 105573 / AG-3a).